The following is a 444-amino-acid chain: Elongation factor 1-alpha (444 aa).

In terms of domain architecture, tr-type G spans 15–236 (KPHINLAVVG…VLDTFQPPPR (222 aa)). Residues 24–31 (GHVDNGKS) are G1. GTP is bound at residue 24–31 (GHVDNGKS). S31 contacts Mg(2+). Residues 80–84 (GVTIE) form a G2 region. The interval 101 to 104 (DLPG) is G3. Residues 101 to 105 (DLPGH) and 163 to 166 (NKMD) contribute to the GTP site. The tract at residues 163–166 (NKMD) is G4. The interval 202–204 (SAV) is G5.

This sequence belongs to the TRAFAC class translation factor GTPase superfamily. Classic translation factor GTPase family. EF-Tu/EF-1A subfamily.

The protein localises to the cytoplasm. It catalyses the reaction GTP + H2O = GDP + phosphate + H(+). In terms of biological role, GTP hydrolase that promotes the GTP-dependent binding of aminoacyl-tRNA to the A-site of ribosomes during protein biosynthesis. The sequence is that of Elongation factor 1-alpha from Pyrobaculum arsenaticum (strain DSM 13514 / JCM 11321 / PZ6).